Consider the following 408-residue polypeptide: Arginine biosynthesis bifunctional protein ArgJ (408 aa).

6 residues coordinate substrate: Thr-162, Lys-188, Thr-199, Glu-280, Asn-403, and Ser-408. The active-site Nucleophile is the Thr-199.

The protein belongs to the ArgJ family. In terms of assembly, heterotetramer of two alpha and two beta chains.

It is found in the cytoplasm. It carries out the reaction N(2)-acetyl-L-ornithine + L-glutamate = N-acetyl-L-glutamate + L-ornithine. It catalyses the reaction L-glutamate + acetyl-CoA = N-acetyl-L-glutamate + CoA + H(+). Its pathway is amino-acid biosynthesis; L-arginine biosynthesis; L-ornithine and N-acetyl-L-glutamate from L-glutamate and N(2)-acetyl-L-ornithine (cyclic): step 1/1. The protein operates within amino-acid biosynthesis; L-arginine biosynthesis; N(2)-acetyl-L-ornithine from L-glutamate: step 1/4. In terms of biological role, catalyzes two activities which are involved in the cyclic version of arginine biosynthesis: the synthesis of N-acetylglutamate from glutamate and acetyl-CoA as the acetyl donor, and of ornithine by transacetylation between N(2)-acetylornithine and glutamate. The polypeptide is Arginine biosynthesis bifunctional protein ArgJ (Ruegeria pomeroyi (strain ATCC 700808 / DSM 15171 / DSS-3) (Silicibacter pomeroyi)).